A 324-amino-acid polypeptide reads, in one-letter code: Beta-ketoacyl-[acyl-carrier-protein] synthase III (324 aa).

Residues C113 and H251 contribute to the active site. The segment at 252 to 256 (QANKR) is ACP-binding. N281 is an active-site residue.

The protein belongs to the thiolase-like superfamily. FabH family. As to quaternary structure, homodimer.

The protein localises to the cytoplasm. The catalysed reaction is malonyl-[ACP] + acetyl-CoA + H(+) = 3-oxobutanoyl-[ACP] + CO2 + CoA. It functions in the pathway lipid metabolism; fatty acid biosynthesis. Functionally, catalyzes the condensation reaction of fatty acid synthesis by the addition to an acyl acceptor of two carbons from malonyl-ACP. Catalyzes the first condensation reaction which initiates fatty acid synthesis and may therefore play a role in governing the total rate of fatty acid production. Possesses both acetoacetyl-ACP synthase and acetyl transacylase activities. Its substrate specificity determines the biosynthesis of branched-chain and/or straight-chain of fatty acids. The sequence is that of Beta-ketoacyl-[acyl-carrier-protein] synthase III from Bartonella henselae (strain ATCC 49882 / DSM 28221 / CCUG 30454 / Houston 1) (Rochalimaea henselae).